The chain runs to 819 residues: LPS-assembly protein LptD (819 aa).

The first 33 residues, 1 to 33 (MRQMKYQFKFNPLAAAIFTLLCGGSMQSSYADA), serve as a signal peptide directing secretion.

The protein belongs to the LptD family. Component of the lipopolysaccharide transport and assembly complex. Interacts with LptE and LptA.

The protein localises to the cell outer membrane. In terms of biological role, together with LptE, is involved in the assembly of lipopolysaccharide (LPS) at the surface of the outer membrane. The chain is LPS-assembly protein LptD from Acinetobacter baylyi (strain ATCC 33305 / BD413 / ADP1).